An 861-amino-acid chain; its full sequence is Integrator complex subunit 6-like (861 aa).

The region spanning I3–V227 is the VWFA domain. A Phosphoserine modification is found at S617.

The protein is Integrator complex subunit 6-like (Ints6l) of Mus musculus (Mouse).